Reading from the N-terminus, the 724-residue chain is Phosphoribosylformylglycinamidine synthase subunit PurL (724 aa).

His-46 is a catalytic residue. Tyr-49 and Lys-88 together coordinate ATP. Glu-90 contributes to the Mg(2+) binding site. Residues 91 to 94 (SHNH) and Arg-113 contribute to the substrate site. His-92 functions as the Proton acceptor in the catalytic mechanism. Residue Asp-114 coordinates Mg(2+). Position 237 (Gln-237) interacts with substrate. Position 265 (Asp-265) interacts with Mg(2+). 309–311 (ESQ) is a binding site for substrate. ATP is bound by residues Asp-489 and Gly-526. Asn-527 contributes to the Mg(2+) binding site. Ser-529 is a substrate binding site.

This sequence belongs to the FGAMS family. As to quaternary structure, monomer. Part of the FGAM synthase complex composed of 1 PurL, 1 PurQ and 2 PurS subunits.

The protein localises to the cytoplasm. The catalysed reaction is N(2)-formyl-N(1)-(5-phospho-beta-D-ribosyl)glycinamide + L-glutamine + ATP + H2O = 2-formamido-N(1)-(5-O-phospho-beta-D-ribosyl)acetamidine + L-glutamate + ADP + phosphate + H(+). It functions in the pathway purine metabolism; IMP biosynthesis via de novo pathway; 5-amino-1-(5-phospho-D-ribosyl)imidazole from N(2)-formyl-N(1)-(5-phospho-D-ribosyl)glycinamide: step 1/2. Part of the phosphoribosylformylglycinamidine synthase complex involved in the purines biosynthetic pathway. Catalyzes the ATP-dependent conversion of formylglycinamide ribonucleotide (FGAR) and glutamine to yield formylglycinamidine ribonucleotide (FGAM) and glutamate. The FGAM synthase complex is composed of three subunits. PurQ produces an ammonia molecule by converting glutamine to glutamate. PurL transfers the ammonia molecule to FGAR to form FGAM in an ATP-dependent manner. PurS interacts with PurQ and PurL and is thought to assist in the transfer of the ammonia molecule from PurQ to PurL. This Granulibacter bethesdensis (strain ATCC BAA-1260 / CGDNIH1) protein is Phosphoribosylformylglycinamidine synthase subunit PurL.